The primary structure comprises 102 residues: Small ribosomal subunit protein uS10 (102 aa).

The tract at residues 35 to 58 is disordered; the sequence is SGPIPLPTKTLEIPSRKSPDGEGT.

It belongs to the universal ribosomal protein uS10 family. In terms of assembly, part of the 30S ribosomal subunit.

Involved in the binding of tRNA to the ribosomes. This is Small ribosomal subunit protein uS10 from Halorubrum lacusprofundi (strain ATCC 49239 / DSM 5036 / JCM 8891 / ACAM 34).